The following is a 144-amino-acid chain: Large ribosomal subunit protein uL16 (144 aa).

Belongs to the universal ribosomal protein uL16 family. Part of the 50S ribosomal subunit.

In terms of biological role, binds 23S rRNA and is also seen to make contacts with the A and possibly P site tRNAs. This chain is Large ribosomal subunit protein uL16, found in Halalkalibacterium halodurans (strain ATCC BAA-125 / DSM 18197 / FERM 7344 / JCM 9153 / C-125) (Bacillus halodurans).